The primary structure comprises 447 residues: Phosphoglucosamine mutase (447 aa).

Ser103 (phosphoserine intermediate) is an active-site residue. Mg(2+) is bound by residues Ser103, Asp242, Asp244, and Asp246. Ser103 is subject to Phosphoserine.

It belongs to the phosphohexose mutase family. It depends on Mg(2+) as a cofactor. Post-translationally, activated by phosphorylation.

The catalysed reaction is alpha-D-glucosamine 1-phosphate = D-glucosamine 6-phosphate. Catalyzes the conversion of glucosamine-6-phosphate to glucosamine-1-phosphate. The polypeptide is Phosphoglucosamine mutase (Cereibacter sphaeroides (strain ATCC 17025 / ATH 2.4.3) (Rhodobacter sphaeroides)).